A 141-amino-acid polypeptide reads, in one-letter code: Large ribosomal subunit protein uL11c (141 aa).

The protein belongs to the universal ribosomal protein uL11 family. As to quaternary structure, part of the ribosomal stalk of the 50S ribosomal subunit. Interacts with L10 and the large rRNA to form the base of the stalk. L10 forms an elongated spine to which L12 dimers bind in a sequential fashion forming a multimeric L10(L12)X complex.

It is found in the plastid. It localises to the chloroplast. Functionally, forms part of the ribosomal stalk which helps the ribosome interact with GTP-bound translation factors. This is Large ribosomal subunit protein uL11c from Pyropia yezoensis (Susabi-nori).